The primary structure comprises 173 residues: ATP-dependent protease subunit HslV (173 aa).

The active site involves Thr-2. Na(+)-binding residues include Gly-158, Asp-161, and Ser-164.

Belongs to the peptidase T1B family. HslV subfamily. As to quaternary structure, a double ring-shaped homohexamer of HslV is capped on each side by a ring-shaped HslU homohexamer. The assembly of the HslU/HslV complex is dependent on binding of ATP.

The protein localises to the cytoplasm. The enzyme catalyses ATP-dependent cleavage of peptide bonds with broad specificity.. With respect to regulation, allosterically activated by HslU binding. Its function is as follows. Protease subunit of a proteasome-like degradation complex believed to be a general protein degrading machinery. This is ATP-dependent protease subunit HslV from Haemophilus ducreyi (strain 35000HP / ATCC 700724).